The chain runs to 137 residues: Nucleoside diphosphate kinase (137 aa).

Residues K9, F57, R85, T91, R102, and N112 each contribute to the ATP site. H115 serves as the catalytic Pros-phosphohistidine intermediate.

The protein belongs to the NDK family. Homotetramer. The cofactor is Mg(2+).

The protein resides in the cytoplasm. It carries out the reaction a 2'-deoxyribonucleoside 5'-diphosphate + ATP = a 2'-deoxyribonucleoside 5'-triphosphate + ADP. The catalysed reaction is a ribonucleoside 5'-diphosphate + ATP = a ribonucleoside 5'-triphosphate + ADP. Its function is as follows. Major role in the synthesis of nucleoside triphosphates other than ATP. The ATP gamma phosphate is transferred to the NDP beta phosphate via a ping-pong mechanism, using a phosphorylated active-site intermediate. This is Nucleoside diphosphate kinase from Syntrophotalea carbinolica (strain DSM 2380 / NBRC 103641 / GraBd1) (Pelobacter carbinolicus).